The sequence spans 43 residues: Delta-actitoxin-Bca1a (43 aa).

3 cysteine pairs are disulfide-bonded: C1–C41, C3–C31, and C24–C42.

It is found in the secreted. It localises to the nematocyst. In terms of biological role, binds specifically to voltage-gated sodium channels (Nav), thereby delaying their inactivation during signal transduction. Thus it strongly stimulates mammalian cardiac muscle contraction. This chain is Delta-actitoxin-Bca1a, found in Bunodosoma capense (Knobbly sea anemone).